The following is a 349-amino-acid chain: Serine/threonine-protein kinase mos (349 aa).

The Protein kinase domain maps to 64–345; it reads LCLLQPLGSG…AQLLPSLRAL (282 aa). Residues 70–78 and Lys91 contribute to the ATP site; that span reads LGSGGFGAV. Residue Asp205 is the Proton acceptor of the active site.

It belongs to the protein kinase superfamily. Ser/Thr protein kinase family.

It is found in the cytoplasm. It carries out the reaction L-seryl-[protein] + ATP = O-phospho-L-seryl-[protein] + ADP + H(+). The enzyme catalyses L-threonyl-[protein] + ATP = O-phospho-L-threonyl-[protein] + ADP + H(+). Serine/threonine kinase involved in the regulation of MAPK signaling. This chain is Serine/threonine-protein kinase mos (MOS), found in Gallus gallus (Chicken).